A 265-amino-acid chain; its full sequence is Glutamate racemase (265 aa).

Residues 7–8 (DS) and 39–40 (YG) contribute to the substrate site. Catalysis depends on Cys-70, which acts as the Proton donor/acceptor. Substrate is bound at residue 71 to 72 (NT). The Proton donor/acceptor role is filled by Cys-182. 183–184 (TH) lines the substrate pocket.

This sequence belongs to the aspartate/glutamate racemases family.

The enzyme catalyses L-glutamate = D-glutamate. It participates in cell wall biogenesis; peptidoglycan biosynthesis. Provides the (R)-glutamate required for cell wall biosynthesis. The polypeptide is Glutamate racemase (Lachnospira eligens (strain ATCC 27750 / DSM 3376 / VPI C15-48 / C15-B4) (Eubacterium eligens)).